The primary structure comprises 410 residues: Lissencephaly-1 homolog (410 aa).

Residues 7–39 form the LisH domain; that stretch reads QRDELNRAIADYLRSNGYEEAYSTFKKEAELDN. The stretch at 32–82 forms a coiled coil; that stretch reads KKEAELDNNEELDKKYAGLLEKKWTSVIRLQKKVMELESKLNEAKEEITLG. 7 WD repeats span residues 106-147, 148-189, 190-229, 232-271, 274-333, 336-375, and 378-410; these read GHRS…RTLK, GHTD…RTMH, GHDH…CVKT, GHRE…CKAE, EHEH…CLMT, GHDN…CMKT, and AHEH…WECR.

This sequence belongs to the WD repeat LIS1/nudF family. As to quaternary structure, can self-associate. Component of the cytosolic PAF-AH (I) heterotetrameric enzyme, which is composed of PAFAH1B1 (beta), PAFAH1B2 (alpha2) and PAFAH1B3 (alpha1) subunits. The catalytic activity of the enzyme resides in the alpha1 (PAFAH1B3) and alpha2 (PAFAH1B2) subunits, whereas the beta subunit (PAFAH1B1) has regulatory activity. Trimer formation is not essential for the catalytic activity. Interacts with dynein, dynactin, nde1 and ndel1.

It localises to the cytoplasm. It is found in the cytoskeleton. Its subcellular location is the microtubule organizing center. The protein resides in the centrosome. Regulatory subunit (beta subunit) of the cytosolic type I platelet-activating factor (PAF) acetylhydrolase (PAF-AH (I)), an enzyme that catalyzes the hydrolyze of the acetyl group at the sn-2 position of PAF and its analogs and participates in the PAF inactivation. Positively regulates the activity of the minus-end directed microtubule motor protein dynein. May enhance dynein-mediated microtubule sliding by targeting dynein to the microtubule plus end. Required for several dynein- and microtubule-dependent processes such as the maintenance of Golgi integrity, the peripheral transport of microtubule fragments and the coupling of the nucleus and centrosome. May be required for proliferation of neuronal precursors and neuronal migration. In Tetraodon nigroviridis (Spotted green pufferfish), this protein is Lissencephaly-1 homolog (pafah1b1).